A 352-amino-acid chain; its full sequence is Extracellular minor metalloprotease (352 aa).

2 disordered regions span residues 41-86 (GNKP…QPRR) and 144-164 (TARS…ELTH). Basic and acidic residues predominate over residues 48-57 (PTEKNARAGE). 2 stretches are compositionally biased toward low complexity: residues 71 to 85 (ARQT…QQPR) and 144 to 156 (TARS…SPST). Histidine 160 serves as a coordination point for Zn(2+). Glutamate 161 is an active-site residue. Zn(2+) contacts are provided by histidine 164 and glutamate 184. Histidine 262 functions as the Proton donor in the catalytic mechanism. Positions 303 to 325 (TPTSDHLRPRHGETRAGLRTKRG) are disordered. A compositionally biased stretch (basic and acidic residues) spans 304-325 (PTSDHLRPRHGETRAGLRTKRG).

Belongs to the peptidase M4 family. The cofactor is Zn(2+).

It is found in the secreted. This Serratia marcescens (strain ATCC 21074 / E-15) protein is Extracellular minor metalloprotease (smp).